A 190-amino-acid chain; its full sequence is CASP-like protein 1E1 (190 aa).

The segment at 1-23 is disordered; it reads MEHESKNKVDGMEMEKGKKESGS. Over 1–28 the chain is Cytoplasmic; sequence MEHESKNKVDGMEMEKGKKESGSRKGLE. A helical membrane pass occupies residues 29–49; that stretch reads LTMRVLALVLTMVAATVLGVA. The Extracellular segment spans residues 50–83; sequence KQTKVVPIKLIPTLPPLNVSTTAKASYLSAFVYN. Asn-67 carries an N-linked (GlcNAc...) asparagine glycan. A helical transmembrane segment spans residues 84–104; sequence ISANAIACGYTAISIVIVMIS. The Cytoplasmic portion of the chain corresponds to 105 to 111; sequence KGKRSKS. Residues 112–132 form a helical membrane-spanning segment; that stretch reads LLMAVLIGDLMMVALLFSSTG. At 133–163 the chain is on the extracellular side; it reads AAGAIGLMGRHGNKHVMWKKVCGVFGKFCNQ. Residues 164–184 form a helical membrane-spanning segment; the sequence is AAVSVAITLIASVVFMLLVVL. At 185-190 the chain is on the cytoplasmic side; that stretch reads DALKLP.

It belongs to the Casparian strip membrane proteins (CASP) family. Homodimer and heterodimers.

The protein localises to the cell membrane. This is CASP-like protein 1E1 from Arabidopsis thaliana (Mouse-ear cress).